The sequence spans 473 residues: Serine palmitoyltransferase 1 (473 aa).

The interaction with SPTLC2 stretch occupies residues 1–66; it reads MATATEQWVL…KEELIEEWQP (66 aa). A helical membrane pass occupies residues 16 to 36; that stretch reads ALYEAPAYHLILEGILILWII. Phosphotyrosine; by ABL is present on Y164.

It belongs to the class-II pyridoxal-phosphate-dependent aminotransferase family. Component of the serine palmitoyltransferase (SPT) complex, which is also composed of SPTLC2 or SPTLC3 and SPTSSA or SPTSSB. The heterodimer with SPTLC2 or SPTLC3 forms the catalytic core of the enzyme, while SPTSSA or SPTSSB subunits determine substrate specificity. SPT also interacts with ORMDL proteins, especially ORMDL3, which negatively regulate SPT activity in the presence of ceramides. Forms dimers of heterodimers with SPTLC2. Interacts with RTN4. Requires pyridoxal 5'-phosphate as cofactor. In terms of processing, phosphorylation at Tyr-164 inhibits activity and promotes cell survival.

The protein resides in the endoplasmic reticulum membrane. The enzyme catalyses L-serine + hexadecanoyl-CoA + H(+) = 3-oxosphinganine + CO2 + CoA. It catalyses the reaction octadecanoyl-CoA + L-serine + H(+) = 3-oxoeicosasphinganine + CO2 + CoA. The catalysed reaction is tetradecanoyl-CoA + L-serine + H(+) = 3-oxohexadecasphinganine + CO2 + CoA. It carries out the reaction dodecanoyl-CoA + L-serine + H(+) = 3-oxotetradecasphinganine + CO2 + CoA. Its pathway is lipid metabolism; sphingolipid metabolism. SPT complex catalytic activity is negatively regulated by ORMDL proteins, including ORMDL3, in the presence of ceramides. This mechanism allows to maintain ceramide levels at sufficient concentrations for the production of complex sphingolipids, but which prevents the accumulation of ceramides to levels that trigger apoptosis. In terms of biological role, component of the serine palmitoyltransferase multisubunit enzyme (SPT) that catalyzes the initial and rate-limiting step in sphingolipid biosynthesis by condensing L-serine and activated acyl-CoA (most commonly palmitoyl-CoA) to form long-chain bases. The SPT complex is also composed of SPTLC2 or SPTLC3 and SPTSSA or SPTSSB. Within this complex, the heterodimer with SPTLC2 or SPTLC3 forms the catalytic core. The composition of the serine palmitoyltransferase (SPT) complex determines the substrate preference. The SPTLC1-SPTLC2-SPTSSA complex shows a strong preference for C16-CoA substrate, while the SPTLC1-SPTLC3-SPTSSA isozyme uses both C14-CoA and C16-CoA as substrates, with a slight preference for C14-CoA. The SPTLC1-SPTLC2-SPTSSB complex shows a strong preference for C18-CoA substrate, while the SPTLC1-SPTLC3-SPTSSB isozyme displays an ability to use a broader range of acyl-CoAs, without apparent preference. Required for adipocyte cell viability and metabolic homeostasis. This is Serine palmitoyltransferase 1 (SPTLC1) from Pongo abelii (Sumatran orangutan).